A 149-amino-acid polypeptide reads, in one-letter code: UPF0336 protein CMM_2793 (149 aa).

Positions 16-117 (APYLVGREKV…TVTKVATLGG (102 aa)) constitute a MaoC-like domain.

It belongs to the UPF0336 family.

This is UPF0336 protein CMM_2793 from Clavibacter michiganensis subsp. michiganensis (strain NCPPB 382).